A 483-amino-acid chain; its full sequence is Aspartyl/glutamyl-tRNA(Asn/Gln) amidotransferase subunit B (483 aa).

This sequence belongs to the GatB/GatE family. GatB subfamily. As to quaternary structure, heterotrimer of A, B and C subunits.

It carries out the reaction L-glutamyl-tRNA(Gln) + L-glutamine + ATP + H2O = L-glutaminyl-tRNA(Gln) + L-glutamate + ADP + phosphate + H(+). It catalyses the reaction L-aspartyl-tRNA(Asn) + L-glutamine + ATP + H2O = L-asparaginyl-tRNA(Asn) + L-glutamate + ADP + phosphate + 2 H(+). Functionally, allows the formation of correctly charged Asn-tRNA(Asn) or Gln-tRNA(Gln) through the transamidation of misacylated Asp-tRNA(Asn) or Glu-tRNA(Gln) in organisms which lack either or both of asparaginyl-tRNA or glutaminyl-tRNA synthetases. The reaction takes place in the presence of glutamine and ATP through an activated phospho-Asp-tRNA(Asn) or phospho-Glu-tRNA(Gln). The protein is Aspartyl/glutamyl-tRNA(Asn/Gln) amidotransferase subunit B of Granulibacter bethesdensis (strain ATCC BAA-1260 / CGDNIH1).